A 164-amino-acid polypeptide reads, in one-letter code: MRKLSWQHIVLIVLAIILILWIISLLLCRKPVRPTYQVPIIQPMQVIQPHQNDIDPAWQTTYSPNNTDNQNQQYVLYYFNNPSCPHCKNFSSTWDMLKNNFRSINNLSLKEISTDKQENEHLVFYYNIRRVPTIILVTPDKNLEYSGNKSLEDLTQFIRSNMNQ.

Residues 8-28 traverse the membrane as a helical segment; the sequence is HIVLIVLAIILILWIISLLLC. One can recognise a Thioredoxin domain in the interval 36 to 163; that stretch reads YQVPIIQPMQ…LTQFIRSNMN (128 aa). Cys-84 and Cys-87 are joined by a disulfide.

Belongs to the thioredoxin family.

Its subcellular location is the host membrane. The protein resides in the virion. The polypeptide is Thioredoxin domain-containing protein R443 (Acanthamoeba polyphaga mimivirus (APMV)).